The following is a 753-amino-acid chain: Rho guanine nucleotide exchange factor gef1 (753 aa).

Disordered stretches follow at residues 52–150 (SNSY…DRNR), 175–194 (TLRKIHTNTSSNGTSRRVSG), and 200–245 (AQNS…ASLL). Composition is skewed to polar residues over residues 94-105 (DPQTPNTPPVSS), 114-141 (GSFNLPNSNMSHSLNGDSTASNSSTLTP), 181-191 (TNTSSNGTSRR), and 200-220 (AQNSSETSSNRTSAYLPGSST). Residues 230-245 (TLASMPSSHSSTASLL) show a composition bias toward low complexity. In terms of domain architecture, DH spans 311–507 (KRANLIKELV…QELISGINQK (197 aa)).

In terms of assembly, interacts with cdc42.

Its subcellular location is the cytoplasm. Its function is as follows. Has a role in the control of cell polarity and cytokinesis. Involved in bipolar growth, via modulation of cdc42-shk1-orb6 signaling, and septum formation. Stimulates guanine nucleotide exchange of cdc42. This chain is Rho guanine nucleotide exchange factor gef1 (gef1), found in Schizosaccharomyces pombe (strain 972 / ATCC 24843) (Fission yeast).